The following is a 226-amino-acid chain: Enolase-phosphatase E1 (226 aa).

This sequence belongs to the HAD-like hydrolase superfamily. MasA/MtnC family. In terms of assembly, monomer. The cofactor is Mg(2+).

It carries out the reaction 5-methylsulfanyl-2,3-dioxopentyl phosphate + H2O = 1,2-dihydroxy-5-(methylsulfanyl)pent-1-en-3-one + phosphate. It participates in amino-acid biosynthesis; L-methionine biosynthesis via salvage pathway; L-methionine from S-methyl-5-thio-alpha-D-ribose 1-phosphate: step 3/6. Its pathway is amino-acid biosynthesis; L-methionine biosynthesis via salvage pathway; L-methionine from S-methyl-5-thio-alpha-D-ribose 1-phosphate: step 4/6. In terms of biological role, bifunctional enzyme that catalyzes the enolization of 2,3-diketo-5-methylthiopentyl-1-phosphate (DK-MTP-1-P) into the intermediate 2-hydroxy-3-keto-5-methylthiopentenyl-1-phosphate (HK-MTPenyl-1-P), which is then dephosphorylated to form the acireductone 1,2-dihydroxy-3-keto-5-methylthiopentene (DHK-MTPene). The chain is Enolase-phosphatase E1 from Shewanella pealeana (strain ATCC 700345 / ANG-SQ1).